Reading from the N-terminus, the 478-residue chain is Glycogen synthase (478 aa).

Lys-16 provides a ligand contact to ADP-alpha-D-glucose.

This sequence belongs to the glycosyltransferase 1 family. Bacterial/plant glycogen synthase subfamily.

The enzyme catalyses [(1-&gt;4)-alpha-D-glucosyl](n) + ADP-alpha-D-glucose = [(1-&gt;4)-alpha-D-glucosyl](n+1) + ADP + H(+). The protein operates within glycan biosynthesis; glycogen biosynthesis. Functionally, synthesizes alpha-1,4-glucan chains using ADP-glucose. This Lachnoclostridium phytofermentans (strain ATCC 700394 / DSM 18823 / ISDg) (Clostridium phytofermentans) protein is Glycogen synthase.